The sequence spans 412 residues: Major facilitator superfamily domain-containing protein 3 (412 aa).

The next 12 helical transmembrane spans lie at G10 to L30, V40 to V60, V68 to P88, T99 to L119, G152 to A172, T173 to P193, Y204 to T224, L252 to L272, L291 to V311, A320 to F340, F361 to A381, and L384 to L404.

This sequence belongs to the major facilitator superfamily. In brain, expressed in the cortex, striatum, hippocampus, hypothalamus, thalamus and cerebellum (at protein level). Widely expressed with highest levels in kidney and liver.

Its subcellular location is the membrane. In Mus musculus (Mouse), this protein is Major facilitator superfamily domain-containing protein 3 (Mfsd3).